We begin with the raw amino-acid sequence, 103 residues long: Histone H4 (103 aa).

The segment covering methionine 1 to glycine 14 has biased composition (gly residues). The tract at residues methionine 1 to arginine 20 is disordered. Threonine 2 carries the post-translational modification N-acetylthreonine. At lysine 6 the chain carries N6-acetyl-N6-methyllysine; alternate. Residues lysine 6, lysine 9, lysine 13, and lysine 17 each carry the N6-acetyllysine modification. Residue lysine 13 is modified to N6-acetyl-N6-methyllysine; alternate. The residue at position 21 (lysine 21) is an N6,N6-dimethyllysine. Lysine 32 bears the N6-methyllysine mark.

The protein belongs to the histone H4 family. In terms of assembly, the nucleosome is a histone octamer containing two molecules each of H2A, H2B, H3 and H4 assembled in one H3-H4 heterotetramer and two H2A-H2B heterodimers. The octamer wraps approximately 147 bp of DNA.

Its subcellular location is the nucleus. It localises to the chromosome. Core component of nucleosome. Nucleosomes wrap and compact DNA into chromatin, limiting DNA accessibility to the cellular machineries which require DNA as a template. Histones thereby play a central role in transcription regulation, DNA repair, DNA replication and chromosomal stability. DNA accessibility is regulated via a complex set of post-translational modifications of histones, also called histone code, and nucleosome remodeling. Its function is as follows. A mixture of histones H2B and H4 has antimicrobial activity against the Gram-positive bacterium M.luteus. This chain is Histone H4, found in Penaeus vannamei (Whiteleg shrimp).